Reading from the N-terminus, the 260-residue chain is MSLQKTPPTRVFVELVPWADRSRENNLASGRETLPGLRHPLSSTQAQTATREVQVSGTSEVSAGPDRAQVVVRVSSTKEAAAEAKKSVCRRLDYITQSLQQQGVQAENITVTKDFRRVENAYHMEAEVCITFTEFGKMQNICNFLVEKLDSSVVISPPQFYHTPGSVENLRRQACLVAVENAWRKAQEVCNLVGQTLGKPLLIKEEETKEWEGQIDDHQSSRLSSSLTVQQKIKSATIHAASKVFITFEVKGKEKRKKHL.

A disordered region spans residues G30 to T50. The segment covering L41–T50 has biased composition (polar residues). S56, S62, and S235 each carry phosphoserine. T237 is subject to Phosphothreonine. Residues A240–L260 are required for nuclear localization (NLS). S242 carries the post-translational modification Phosphoserine. A Phosphothreonine modification is found at T247.

The protein belongs to the IRAK1BP1 family. As to quaternary structure, interacts with IRAK1 and RELA. Interacts with HSPA8 and HSPA1. In terms of processing, phosphorylation at Ser-56 and/or Ser-62 is required for full activity. Phosphorylated on at least one of Ser-235, Thr-237, Ser-242 and Thr-247 upon TNF-alpha activation, which favors nuclear translocation.

It is found in the cytoplasm. The protein localises to the nucleus. Component of the IRAK1-dependent TNFRSF1A signaling pathway that leads to NF-kappa-B activation and is required for cell survival. Acts by enhancing RELA transcriptional activity. In Homo sapiens (Human), this protein is Interleukin-1 receptor-associated kinase 1-binding protein 1 (IRAK1BP1).